Reading from the N-terminus, the 98-residue chain is Large ribosomal subunit protein bL28 (98 aa).

The protein belongs to the bacterial ribosomal protein bL28 family.

The chain is Large ribosomal subunit protein bL28 from Chelativorans sp. (strain BNC1).